The sequence spans 606 residues: NADH-ubiquinone oxidoreductase chain 5 (606 aa).

15 helical membrane-spanning segments follow: residues 1-21 (MNMF…PIIM), 43-63 (AFMI…ETIF), 87-107 (MIFV…SMWY), 117-137 (FFKY…ANNM), 140-160 (LFIG…WWYG), 171-191 (AVLY…WFLL), 201-221 (IFIT…LAAT), 241-261 (TPVS…FLLI), 273-293 (IQTL…ICAL), 310-330 (LGLM…LHIC), 365-385 (VLPF…GMPF), 409-429 (LLIT…IMFF), 457-477 (LLIG…PTTI), 488-508 (MTAL…NLTT), and 582-602 (GLIK…LLIL).

Belongs to the complex I subunit 5 family. In terms of assembly, core subunit of respiratory chain NADH dehydrogenase (Complex I) which is composed of 45 different subunits.

The protein localises to the mitochondrion inner membrane. The enzyme catalyses a ubiquinone + NADH + 5 H(+)(in) = a ubiquinol + NAD(+) + 4 H(+)(out). Core subunit of the mitochondrial membrane respiratory chain NADH dehydrogenase (Complex I) which catalyzes electron transfer from NADH through the respiratory chain, using ubiquinone as an electron acceptor. Essential for the catalytic activity and assembly of complex I. In Canis lupus familiaris (Dog), this protein is NADH-ubiquinone oxidoreductase chain 5 (MT-ND5).